Consider the following 88-residue polypeptide: Homeobox protein knotted-1-like 11 (88 aa).

The ELK domain occupies 4-24 (ELKEMLLKKYSGCLSRLRSEF). Residues 25-88 (LKKRKKGKLP…NQRKRHWKPS (64 aa)) constitute a DNA-binding region (homeobox; TALE-type).

This sequence belongs to the TALE/KNOX homeobox family.

It localises to the nucleus. Its function is as follows. Probably binds to the DNA sequence 5'-TGAC-3'. In Zea mays (Maize), this protein is Homeobox protein knotted-1-like 11 (KNOX11).